We begin with the raw amino-acid sequence, 61 residues long: Large ribosomal subunit protein uL30 (61 aa).

It belongs to the universal ribosomal protein uL30 family. In terms of assembly, part of the 50S ribosomal subunit.

This chain is Large ribosomal subunit protein uL30, found in Chromobacterium violaceum (strain ATCC 12472 / DSM 30191 / JCM 1249 / CCUG 213 / NBRC 12614 / NCIMB 9131 / NCTC 9757 / MK).